We begin with the raw amino-acid sequence, 428 residues long: Spliceosome RNA helicase Ddx39b (428 aa).

A compositionally biased stretch (acidic residues) spans 1-19; the sequence is MAENDVDNELLDYEDDEVE. Residues 1–31 are disordered; the sequence is MAENDVDNELLDYEDDEVETAAGADGTEAPA. N-acetylalanine is present on A2. An N6-acetyllysine; alternate modification is found at K36. K36 is covalently cross-linked (Glycyl lysine isopeptide (Lys-Gly) (interchain with G-Cter in SUMO2); alternate). Residues S38 and S41 each carry the phosphoserine modification. The Q motif signature appears at 45-73; it reads SGFRDFLLKPELLRAIVDCGFEHPSEVQH. The Helicase ATP-binding domain maps to 76–249; the sequence is IPQAILGMDV…RKFMQDPMEI (174 aa). Position 89 to 96 (89 to 96) interacts with ATP; the sequence is AKSGMGKT. Phosphothreonine is present on T172. A DECD box motif is present at residues 196–199; it reads DECD. Residues 261-422 form the Helicase C-terminal domain; that stretch reads GLQQYYVKLK…ELPDEIDISS (162 aa).

This sequence belongs to the DEAD box helicase family. DECD subfamily. Homodimer, and heterodimer with DDX39A. DDX39B interacts with the THO subcomplex to form the THO-DDX39B complex which multimerizes into a 28-subunit tetrameric assembly. Component of the transcription/export (TREX) complex at least composed of ALYREF/THOC4, DDX39B, SARNP/CIP29, CHTOP and the THO subcomplex; in the complex interacts with THOC2. THOC1-THOC2-THOC3-DDX39B subcomplex is sufficient for the interaction with export factor NXF1-NXT1. TREX seems to have a dynamic structure involving ATP-dependent remodeling. Within the TREX complex bridges ALYREF/THOC4 and the THO subcomplex, and, in a ATP-dependent manner, ALYREF/THOC4 and SARNP/CIP29. Component of the spliceosome. Interacts directly with U2AF2. Interacts with RBM8A, RNPS1 and SRRM1, FYTTD1/UIF, THOC1, MX1 and POLDIP3. Interacts with LUZP4. Interacts with SARNP/CIP29 (via the C-terminal domain); the interaction is direct and facilitates RNA binding of DDX39B.

Its subcellular location is the nucleus. The protein localises to the nucleus speckle. It localises to the cytoplasm. The catalysed reaction is ATP + H2O = ADP + phosphate + H(+). In terms of biological role, involved in nuclear export of spliced and unspliced mRNA. Component of the TREX complex which is thought to couple mRNA transcription, processing and nuclear export, and specifically associates with spliced mRNA and not with unspliced pre-mRNA. The TREX complex is recruited to spliced mRNAs by a transcription-independent mechanism, binds to mRNA upstream of the exon-junction complex (EJC) and is recruited in a splicing- and cap-dependent manner to a region near the 5' end of the mRNA where it functions in mRNA export to the cytoplasm via the TAP/NXF1 pathway. The THOC1-THOC2-THOC3 core complex alone is sufficient to promote ATPase activity of DDX39B; in the complex THOC2 is the only component that directly interacts with DDX39B. Associates with SARNP/CIP29, which facilitates RNA binding of DDX39B and likely plays a role in mRNA export. May undergo several rounds of ATP hydrolysis during assembly of TREX to drive subsequent loading of components such as ALYREF/THOC4 and CHTOP onto mRNA. Also associates with pre-mRNA independent of ALYREF/THOC4. Involved in the nuclear export of intronless mRNA; the ATP-bound form is proposed to recruit export adapter ALYREF/THOC4 to intronless mRNA; its ATPase activity is cooperatively stimulated by RNA and ALYREF/THOC4 and ATP hydrolysis is thought to trigger the dissociation from RNA to allow the association of ALYREF/THOC4 and the NXF1-NXT1 heterodimer. Involved in transcription elongation and genome stability. Functionally, splice factor that is required for the first ATP-dependent step in spliceosome assembly and for the interaction of U2 snRNP with the branchpoint. Has both RNA-stimulated ATP binding/hydrolysis activity and ATP-dependent RNA unwinding activity. Even with the stimulation of RNA, the ATPase activity is weak. Can only hydrolyze ATP but not other NTPs. The RNA stimulation of ATPase activity does not have a strong preference for the sequence and length of the RNA. However, ssRNA stimulates the ATPase activity much more strongly than dsRNA. Can unwind 5' or 3' overhangs or blunt end RNA duplexes in vitro. The ATPase and helicase activities are not influenced by U2AF2; the effect of ALYREF/THOC4 is reported conflictingly. The chain is Spliceosome RNA helicase Ddx39b (Ddx39b) from Mus musculus (Mouse).